The chain runs to 480 residues: UDP-N-acetylmuramate--L-alanine ligase (480 aa).

115 to 121 (GTHGKTT) is a binding site for ATP.

Belongs to the MurCDEF family.

It is found in the cytoplasm. The enzyme catalyses UDP-N-acetyl-alpha-D-muramate + L-alanine + ATP = UDP-N-acetyl-alpha-D-muramoyl-L-alanine + ADP + phosphate + H(+). Its pathway is cell wall biogenesis; peptidoglycan biosynthesis. Its function is as follows. Cell wall formation. This Gluconacetobacter diazotrophicus (strain ATCC 49037 / DSM 5601 / CCUG 37298 / CIP 103539 / LMG 7603 / PAl5) protein is UDP-N-acetylmuramate--L-alanine ligase.